The chain runs to 222 residues: Dihydrophenazinedicarboxylate synthase (222 aa).

Ser18 lines the substrate pocket. Residues 73 to 76 (RIVV) and 88 to 89 (ST) contribute to the FMN site. His90 contributes to the substrate binding site. Residues 94-95 (QK) and Gln117 each bind FMN. Arg139 and Ser147 together coordinate substrate. FMN contacts are provided by residues 152-153 (QS) and Arg205.

It belongs to the pyridoxamine 5'-phosphate oxidase family. FMN serves as cofactor.

The catalysed reaction is (1R,6R)-1,4,5,5a,6,9-hexahydrophenazine-1,6-dicarboxylate + O2 = (1R,10aS)-1,4,10,10a-tetrahydrophenazine-1,6-dicarboxylate + H2O2. The enzyme catalyses (1R,10aS)-1,4,10,10a-tetrahydrophenazine-1,6-dicarboxylate + O2 = (5aS)-5,5a-dihydrophenazine-1,6-dicarboxylate + H2O2. It carries out the reaction (1R,10aS)-1,4,10,10a-tetrahydrophenazine-1-carboxylate + O2 = (10aS)-10,10a-dihydrophenazine-1-carboxylate + H2O2. It catalyses the reaction (1R)-1,4,5,10-tetrahydrophenazine-1-carboxylate + O2 = (10aS)-10,10a-dihydrophenazine-1-carboxylate + H2O2. It participates in antibiotic biosynthesis; phenazine biosynthesis. Functionally, involved in the biosynthesis of the antibiotic phenazine, a nitrogen-containing heterocyclic molecule having important roles in virulence, competition and biological control. Catalyzes several oxidations in the terminal steps of core phenazine biosynthesis. It oxidizes both hexahydrophenazine-1,6-dicarboxylic acid (HHPDC) and tetrahydrophenazine-1-carboxylic acid (THPCA) and thereby contributes to the generation of both phenazine-1,6-dicarboxylic acid (PDC) and phenazine-1-carboxylic acid (PCA). This chain is Dihydrophenazinedicarboxylate synthase, found in Pseudomonas chlororaphis (Pseudomonas aureofaciens).